We begin with the raw amino-acid sequence, 220 residues long: Ribosomal RNA large subunit methyltransferase E (220 aa).

Residues G64, W66, D92, D108, and D133 each coordinate S-adenosyl-L-methionine. The active-site Proton acceptor is the K173.

Belongs to the class I-like SAM-binding methyltransferase superfamily. RNA methyltransferase RlmE family.

The protein resides in the cytoplasm. The enzyme catalyses uridine(2552) in 23S rRNA + S-adenosyl-L-methionine = 2'-O-methyluridine(2552) in 23S rRNA + S-adenosyl-L-homocysteine + H(+). Specifically methylates the uridine in position 2552 of 23S rRNA at the 2'-O position of the ribose in the fully assembled 50S ribosomal subunit. This chain is Ribosomal RNA large subunit methyltransferase E, found in Acidovorax sp. (strain JS42).